Consider the following 541-residue polypeptide: uncharacterized protein (541 aa).

The next 5 membrane-spanning stretches (helical) occupy residues 4 to 23 (FVAN…LAIG), 30 to 47 (FSLG…FAAV), 57 to 79 (VYIL…AFFA), 91 to 113 (LAIT…IHLN), and 156 to 178 (LVAY…GLCA). RCK C-terminal domains are found at residues 187-271 (QEAH…VLGD) and 273-354 (LPGD…LFGD). A run of 5 helical transmembrane segments spans residues 362–384 (FNLF…EVPL), 389–411 (ALSL…VGRS), 424–446 (LALR…GASF), 456–478 (LTII…VVGY), and 516–538 (LGYT…VVLF).

This sequence belongs to the AAE transporter (TC 2.A.81) family.

It is found in the cell membrane. This is an uncharacterized protein from Corynebacterium diphtheriae (strain ATCC 700971 / NCTC 13129 / Biotype gravis).